Reading from the N-terminus, the 330-residue chain is Aspartate--ammonia ligase (330 aa).

Belongs to the class-II aminoacyl-tRNA synthetase family. AsnA subfamily.

Its subcellular location is the cytoplasm. It catalyses the reaction L-aspartate + NH4(+) + ATP = L-asparagine + AMP + diphosphate + H(+). Its pathway is amino-acid biosynthesis; L-asparagine biosynthesis; L-asparagine from L-aspartate (ammonia route): step 1/1. The chain is Aspartate--ammonia ligase from Mannheimia succiniciproducens (strain KCTC 0769BP / MBEL55E).